We begin with the raw amino-acid sequence, 356 residues long: Golgi-resident adenosine 3',5'-bisphosphate 3'-phosphatase (356 aa).

Position 1 is an N-acetylmethionine (methionine 1). Over 1–12 the chain is Cytoplasmic; that stretch reads MAPMGIRLSPLG. A helical transmembrane segment spans residues 13 to 33; the sequence is VAVFFLLGLGVLYHLYSGFLA. Residues 34-356 are Lumenal-facing; it reads GRFSLFGLGG…KLPDLEKSGH (323 aa). A disordered region spans residues 82–104; sequence VRESNVLHEKSKGKTREGAEDKM. Aspartate 108 acts as the Proton acceptor in catalysis. Residues glutamate 131, aspartate 172, leucine 174, and aspartate 175 each contribute to the Mg(2+) site. Catalysis depends on threonine 177, which acts as the Proton acceptor. AMP contacts are provided by serine 240 and histidine 243. An N-linked (GlcNAc...) asparagine glycan is attached at asparagine 257. AMP contacts are provided by glycine 266 and lysine 270. Aspartate 298 contacts Mg(2+).

Belongs to the inositol monophosphatase superfamily. Mg(2+) is required as a cofactor. Contains N-linked glycan resistant to endoglycosydase H.

Its subcellular location is the golgi apparatus. The protein localises to the trans-Golgi network membrane. The catalysed reaction is adenosine 3',5'-bisphosphate + H2O = AMP + phosphate. It functions in the pathway sulfur metabolism. With respect to regulation, strongly inhibited by lithium. Exhibits 3'-nucleotidase activity toward adenosine 3',5'-bisphosphate (PAP), namely hydrolyzes adenosine 3',5'-bisphosphate into adenosine 5'-monophosphate (AMP) and a phosphate. May play a role in the formation of skeletal elements derived through endochondral ossification, possibly by clearing adenosine 3',5'-bisphosphate produced by Golgi sulfotransferases during glycosaminoglycan sulfation. Has no activity toward 3'-phosphoadenosine 5'-phosphosulfate (PAPS) or inositol phosphate (IP) substrates including I(1)P, I(1,4)P2, I(1,3,4)P3, I(1,4,5)P3 and I(1,3,4,5)P4. This Rattus norvegicus (Rat) protein is Golgi-resident adenosine 3',5'-bisphosphate 3'-phosphatase (Bpnt2).